The chain runs to 481 residues: UDP-glucose 6-dehydrogenase (481 aa).

Residues 16–21, D41, K46, 94–98, 135–136, and E172 contribute to the NAD(+) site; these read GAGYVG, VNTPT, and ST. Residues 168–172, 227–231, R267, and 274–280 contribute to the substrate site; these read EFLAE, KLVAN, and QASVGFG. The active-site Nucleophile is the C283. 283-286 is an NAD(+) binding site; it reads CFQK. A substrate-binding site is contributed by 345–346; sequence FK. R353 is an NAD(+) binding site. R447 serves as a coordination point for substrate.

It belongs to the UDP-glucose/GDP-mannose dehydrogenase family. As to expression, expressed in the vulva and in oocytes.

The enzyme catalyses UDP-alpha-D-glucose + 2 NAD(+) + H2O = UDP-alpha-D-glucuronate + 2 NADH + 3 H(+). It functions in the pathway nucleotide-sugar biosynthesis; UDP-alpha-D-glucuronate biosynthesis; UDP-alpha-D-glucuronate from UDP-alpha-D-glucose: step 1/1. Functionally, involved in the biosynthesis of glycosaminoglycans; hyaluronan, chondroitin sulfate, and heparan sulfate. This is UDP-glucose 6-dehydrogenase (sqv-4) from Caenorhabditis elegans.